The sequence spans 446 residues: Mycosin-1 (446 aa).

Residues 1 to 21 (MHRIFLITVALALLTASPASA) form the signal peptide. The segment at 24–43 (PPPIDPGALPPDVTGPDQPT) is disordered. The 324-residue stretch at 64–387 (PWSNTYLGVA…AGVIDAVAAL (324 aa)) folds into the Peptidase S8 domain. Residues D90, H121, and S332 each act as charge relay system in the active site. A helical transmembrane segment spans residues 419 to 439 (ITAVALVAVGLTLALGLGALA).

The protein belongs to the peptidase S8 family.

Its subcellular location is the cell membrane. Functionally, may play a dual role in regulation of ESX-1 secretion and virulence. Acts as a protease that cleaves EspB. Essential for ESX-1 function, required for early replication in macrophages and full virulence in mice. This Mycobacterium tuberculosis (strain ATCC 25618 / H37Rv) protein is Mycosin-1.